The following is a 77-amino-acid chain: Small integral membrane protein 7 (77 aa).

A signal peptide spans 1–17 (MIGDLLIFGTLLMNAGA). Residues 18–55 (VLNFKLKKRETQSQGFGDDSGSSSTGENIREFLLSLRY) are Extracellular-facing. Residues 56 to 76 (FRIFIALWNIFMMFCMIVLFG) form a helical membrane-spanning segment. Residue Ser-77 is a topological domain, cytoplasmic.

It belongs to the SMIM7 family.

Its subcellular location is the membrane. This chain is Small integral membrane protein 7 (smim7), found in Danio rerio (Zebrafish).